A 631-amino-acid chain; its full sequence is MSKSHAAYIDYALRRTTNMPVEMMGSDVVRLKDYQHFVARVFLGLDSMHSLLLFHETGVGKTMTTVYILKHLKDIYTNWAIILLVKKALIEDPWMNTILRYAPEITKDCIFINYDDQNFRNKFFTNIKTINSKSRICVIIDECHNFISKSLIKEDGKIRPTRSVYNFLSKTIALKNHKMICLSATPIVNSVQEFTMLVNLLRPGSLQHQSLFENKRLVDEKELVSKLGGLCSYIVNNEFSIFDDVEGSASFAKKTVLMRYVNMSKKQEEIYQKAKLAEIKTGISSFRILRRMATTFTFDSFPERQNRDPGEYAQEIATLYNDFKNSLRDREFSKSALDTFKRGELLGGDASAADISLFTELKEKSVKFIDVCLGILASHGKCLVFEPFVNQSGIEILLLYFKVFGISNIEFSSRTKDTRIKAVAEFNQESNTNGECIKTCVFSSSGGEGISFFSINDIFILDMTWNEASLRQIVGRAIRLNSHVLTPPERRYVNVHFIMARLSNGMPTVDEDLFEIIQSKSKEFVQLFRVFKHTSLEWIHANEKDFSPIDNESGWKTLVSRAIDLSSNKNITNKLIEGTNIWYSNSNRLMSINRGFKGVDGRVYDVDGNYLHDMPDNPVIKIHDGKLIYIF.

The 163-residue stretch at Phe-42–Gly-204 folds into the Helicase ATP-binding domain. His-55–Thr-62 serves as a coordination point for ATP. Residues Asp-141 to His-144 carry the DEXH box motif. Residues Lys-367–Lys-532 form the Helicase C-terminal domain. The tract at residues Asp-457–Phe-524 is binding to the cap-specific mRNA (nucleoside-2'-O-)-methyltransferase.

Belongs to the helicase family. NPH I subfamily. In terms of assembly, monomer. Interacts (via C-terminus) with RAP94/OPG109 (via N-terminus). Interacts with the cap-specific mRNA (nucleoside-2'-O-)-methyltransferase OPG102.

It is found in the virion. The enzyme catalyses a ribonucleoside 5'-triphosphate + H2O = a ribonucleoside 5'-diphosphate + phosphate + H(+). In terms of biological role, DNA-dependent ATPase that acts as a 5' to 3' translocase on single-stranded DNA and thereby plays a role in transcription termination of viral early genes. Uses forward translocation in concert with the viral RNA polymerase RAP94/OPG109 subunit and the capping enzyme/VTF to catalyze release of UUUUUNU-containing nascent RNA from the elongation complex. In addition, acts as a positive elongation factor to assist transcription through problematic sequences. The sequence is that of Nucleoside triphosphatase I (OPG123) from Bos taurus (Bovine).